Consider the following 596-residue polypeptide: Actin-histidine N-methyltransferase (596 aa).

Residues 1–22 form a disordered region; that stretch reads MGKKSRVKTQKSGTGATATVSP. A compositionally biased stretch (polar residues) spans 10–20; that stretch reads QKSGTGATATV. Residues arginine 75, 104–106, arginine 254, 275–279, and 325–327 each bind S-adenosyl-L-methionine; these read EGF, DMCNH, and SGF. The SET domain occupies 94 to 314; it reads EGFEMVNFKE…AGDQIYIFYG (221 aa). The disordered stretch occupies residues 551–596; the sequence is GLVNGESLIPNGTRSENESLSPEESENTTGDTEESSGSMDAVKERL. Residues 571–584 show a composition bias toward acidic residues; that stretch reads SPEESENTTGDTEE.

The protein belongs to the class V-like SAM-binding methyltransferase superfamily. SETD3 actin-histidine methyltransferase family. Interacts with MYOD1. Post-translationally, phosphorylated by GSK3B, which is required for recognition by the SCF(FBXW7) complex and subsequent degradation. In terms of processing, ubiquitinated by the SCF(FBXW7) complex following phosphorylation by GSK3B, leading to its degradation by the proteasome.

It localises to the cytoplasm. The protein resides in the nucleus. It catalyses the reaction L-histidyl-[protein] + S-adenosyl-L-methionine = N(tele)-methyl-L-histidyl-[protein] + S-adenosyl-L-homocysteine + H(+). Its function is as follows. Protein-histidine N-methyltransferase that specifically mediates 3-methylhistidine (tele-methylhistidine) methylation of actin at 'His-73'. Histidine methylation of actin is required for smooth muscle contraction of the laboring uterus during delivery. Does not have protein-lysine N-methyltransferase activity and probably only catalyzes histidine methylation of actin. This is Actin-histidine N-methyltransferase from Rattus norvegicus (Rat).